We begin with the raw amino-acid sequence, 269 residues long: Tryptophan synthase alpha chain (269 aa).

Residues Glu-49 and Asp-60 each act as proton acceptor in the active site.

This sequence belongs to the TrpA family. Tetramer of two alpha and two beta chains.

It carries out the reaction (1S,2R)-1-C-(indol-3-yl)glycerol 3-phosphate + L-serine = D-glyceraldehyde 3-phosphate + L-tryptophan + H2O. The protein operates within amino-acid biosynthesis; L-tryptophan biosynthesis; L-tryptophan from chorismate: step 5/5. Functionally, the alpha subunit is responsible for the aldol cleavage of indoleglycerol phosphate to indole and glyceraldehyde 3-phosphate. The sequence is that of Tryptophan synthase alpha chain from Pseudomonas putida (strain GB-1).